Here is a 101-residue protein sequence, read N- to C-terminus: Protein RnfH (101 aa).

It belongs to the UPF0125 (RnfH) family.

The protein is Protein RnfH of Pseudomonas aeruginosa (strain LESB58).